The chain runs to 249 residues: Early E1A protein (249 aa).

The tract at residues 38 to 46 (MSLHDLFDV) is interaction with RB1 in competition with E2F1. The segment at 74–131 (SAAESGSGDSGVGEELLPVDLDLKCYEDGLPPSDPETDEATEAEEEAAMPTYVNENEN) is interaction with UBE2I. The LXCXE motif, interaction with host RB1 and TMEM173/STING motif lies at 96–100 (LKCYE). A zinc finger spans residues 145-165 (CRACDFHRGTSGNPEAMCALC). The disordered stretch occupies residues 180–203 (DAEGESESGSPEDTDFPHPLTATP). A compositionally biased stretch (acidic residues) spans 181–193 (AEGESESGSPEDT). Positions 238-242 (PLNLS) match the PXDLS motif, CTBP-binding motif. Positions 244–248 (KRPKC) match the Nuclear localization signal motif.

The protein belongs to the adenoviridae E1A protein family. Interacts with host UBE2I; this interaction interferes with polySUMOylation. Interacts with host RB1; this interaction induces the aberrant dissociation of RB1-E2F1 complex thereby disrupting the activity of RB1 and activating E2F1-regulated genes. Interacts with host ATF7; the interaction enhances ATF7-mediated viral transactivation activity which requires the zinc binding domains of both proteins. Isoform early E1A 32 kDa protein and isoform early E1A 26 kDa protein interact (via N-terminus) with CUL1 and E3 ubiquitin ligase RBX1; these interactions inhibit RBX1-CUL1-dependent elongation reaction of ubiquitin chains and attenuate ubiquitination of SCF(FBXW7) target proteins. Interacts (via PXLXP motif) with host ZMYND11/BS69 (via MYND-type zinc finger); this interaction inhibits E1A mediated transactivation. Interacts with host EP300; this interaction stimulates the acetylation of RB1 by recruiting EP300 and RB1 into a multimeric-protein complex. Interacts with host CTBP1 and CTBP2; this interaction seems to potentiate viral replication. Interacts with host DCAF7. Interacts with host DYRK1A. Interacts with host KPNA4; this interaction allows E1A import into the host nucleus. Interacts with host EP400; this interaction stabilizes MYC. Interacts with host TBP protein; this interaction probably disrupts the TBP-TATA complex. Interacts (via LXCXE motif) with host TMEM173/STING; this interaction impairs the ability of TMEM173/STING to sense cytosolic DNA and promote the production of type I interferon (IFN-alpha and IFN-beta). Interacts (via C-terminus) with host ZBED1/hDREF (via C-terminus); the interaction is direct.

The protein localises to the host nucleus. Plays a role in viral genome replication by driving entry of quiescent cells into the cell cycle. Stimulation of progression from G1 to S phase allows the virus to efficiently use the cellular DNA replicating machinery to achieve viral genome replication. E1A protein has both transforming and trans-activating activities. Induces the disassembly of the E2F1 transcription factor from RB1 by direct competition for the same binding site on RB1, with subsequent transcriptional activation of E2F1-regulated S-phase genes and of the E2 region of the adenoviral genome. Release of E2F1 leads to the ARF-mediated inhibition of MDM2 and causes TP53/p53 to accumulate because it is not targeted for degradation by MDM2-mediated ubiquitination anymore. This increase in TP53, in turn, would arrest the cell proliferation and direct its death but this effect is counteracted by the viral protein E1B-55K. Inactivation of the ability of RB1 to arrest the cell cycle is critical for cellular transformation, uncontrolled cellular growth and proliferation induced by viral infection. Interaction with RBX1 and CUL1 inhibits ubiquitination of the proteins targeted by SCF(FBXW7) ubiquitin ligase complex, and may be linked to unregulated host cell proliferation. The tumorigenesis-restraining activity of E1A may be related to the disruption of the host CtBP-CtIP complex through the CtBP binding motif. Interaction with host TMEM173/STING impairs the ability of TMEM173/STING to sense cytosolic DNA and promote the production of type I interferon (IFN-alpha and IFN-beta). Promotes the sumoylation of host ZBED1/hDREF with SUMO1. This Homo sapiens (Human) protein is Early E1A protein.